The following is a 214-amino-acid chain: Molybdenum cofactor guanylyltransferase (214 aa).

Residues 18-20 (LAG), K31, D77, and D112 each bind GTP. Residue D112 participates in Mg(2+) binding.

This sequence belongs to the MobA family. Monomer. Mg(2+) serves as cofactor.

It is found in the cytoplasm. The catalysed reaction is Mo-molybdopterin + GTP + H(+) = Mo-molybdopterin guanine dinucleotide + diphosphate. Transfers a GMP moiety from GTP to Mo-molybdopterin (Mo-MPT) cofactor (Moco or molybdenum cofactor) to form Mo-molybdopterin guanine dinucleotide (Mo-MGD) cofactor. The sequence is that of Molybdenum cofactor guanylyltransferase from Rhodopseudomonas palustris (strain HaA2).